The sequence spans 382 residues: Succinate--CoA ligase [ADP-forming] subunit beta (382 aa).

The ATP-grasp domain occupies 9 to 240; it reads KELFSKYGVK…PRDVSEFEMY (232 aa). ATP contacts are provided by residues Lys-45, 52–54, Val-94, and Glu-99; that span reads GRG. Mg(2+)-binding residues include Asn-193 and Asp-207. Substrate is bound by residues Asn-260 and 317–319; that span reads GIT.

It belongs to the succinate/malate CoA ligase beta subunit family. Heterotetramer of two alpha and two beta subunits. Mg(2+) is required as a cofactor.

The enzyme catalyses succinate + ATP + CoA = succinyl-CoA + ADP + phosphate. It carries out the reaction GTP + succinate + CoA = succinyl-CoA + GDP + phosphate. It participates in carbohydrate metabolism; tricarboxylic acid cycle; succinate from succinyl-CoA (ligase route): step 1/1. Succinyl-CoA synthetase functions in the citric acid cycle (TCA), coupling the hydrolysis of succinyl-CoA to the synthesis of either ATP or GTP and thus represents the only step of substrate-level phosphorylation in the TCA. The beta subunit provides nucleotide specificity of the enzyme and binds the substrate succinate, while the binding sites for coenzyme A and phosphate are found in the alpha subunit. The chain is Succinate--CoA ligase [ADP-forming] subunit beta from Pyrobaculum arsenaticum (strain DSM 13514 / JCM 11321 / PZ6).